The following is a 417-amino-acid chain: Probable histone-binding protein lin-53 (417 aa).

WD repeat units lie at residues 118–158 (NHEG…AVPR), 170–210 (GHTK…NVAG), 220–260 (GHES…PGHC), 263–303 (AHSA…MKLH), 307–347 (SHRD…EDQS), and 364–404 (GHTA…YNEV).

This sequence belongs to the WD repeat RBAP46/RBAP48/MSI1 family. Binds directly to helix 1 of the histone fold of histone H4, a region that is not accessible when H4 is in chromatin. Probable component of a NuRD-like complex, composed of at least lin-53 and hda-1. Interacts with lin-35. Interacts with hda-1; the interaction is direct. Component of the DRM complex, at least composed of lin-9, lin-35, lin-37, lin-52, lin-53, lin-54- dpl-1 and efl-1. Interacts with hcp-3.

The protein resides in the nucleus. The protein localises to the chromosome. It is found in the centromere. In terms of biological role, core histone-binding subunit that may target chromatin assembly factors, chromatin remodeling factors and histone deacetylases to their histone substrates in a manner that is regulated by nucleosomal DNA. Required for hcp-3 and his-1 stabilization, localization of hcp-3 to centromeres and for proper chromosome segregation. Synthetic multivulva class B (synMuvB) protein. SynMuvB proteins are required to repress the induction of vulval development by Ras signaling and probably act by forming the multiprotein DRM complex that represses transcription. The polypeptide is Probable histone-binding protein lin-53 (Caenorhabditis elegans).